The sequence spans 631 residues: Arginine--tRNA ligase (631 aa).

Residues 132-142 carry the 'HIGH' region motif; sequence PNIAKPLHVGH.

The protein belongs to the class-I aminoacyl-tRNA synthetase family.

Its subcellular location is the cytoplasm. It catalyses the reaction tRNA(Arg) + L-arginine + ATP = L-arginyl-tRNA(Arg) + AMP + diphosphate. This Halobacterium salinarum (strain ATCC 700922 / JCM 11081 / NRC-1) (Halobacterium halobium) protein is Arginine--tRNA ligase.